An 804-amino-acid chain; its full sequence is Protein SEY1 homolog 1 (804 aa).

The Cytoplasmic portion of the chain corresponds to 1-638 (MEQIITGEGQ…SVLASQNNEH (638 aa)). The GB1/RHD3-type G domain occupies 28–245 (GTDYHMVSII…EENYLFKEKS (218 aa)). Residue 38 to 45 (GCQSSGKS) participates in GTP binding. The helical transmembrane segment at 639–659 (IPPWAWFLFLFSCSDYILWWL) threads the bilayer. Over 660-662 (SNP) the chain is Lumenal. A helical transmembrane segment spans residues 663 to 683 (LLFSLTVLFGGTYLVLNQLGL). Residues 684-804 (WDTAVQKLLD…RKRVRVGTLV (121 aa)) lie on the Cytoplasmic side of the membrane. A disordered region spans residues 706–804 (PDENNETETN…RKRVRVGTLV (99 aa)). Over residues 751-791 (QGLTKTESNVTFANVSNANDEQSLTKNNTEDSLNTGSSSSG) the composition is skewed to polar residues. Residues 792–804 (QRHRKRVRVGTLV) show a composition bias toward basic residues.

This sequence belongs to the TRAFAC class dynamin-like GTPase superfamily. GB1/RHD3 GTPase family. RHD3 subfamily.

It localises to the endoplasmic reticulum membrane. Its function is as follows. Probable GTP-binding protein that may be involved in cell development. The sequence is that of Protein SEY1 homolog 1 from Trichomonas vaginalis (strain ATCC PRA-98 / G3).